The sequence spans 869 residues: DNA mismatch repair protein MutS (869 aa).

619–626 (GPNMAGKS) is an ATP binding site.

It belongs to the DNA mismatch repair MutS family.

Its function is as follows. This protein is involved in the repair of mismatches in DNA. It is possible that it carries out the mismatch recognition step. This protein has a weak ATPase activity. This is DNA mismatch repair protein MutS from Caldanaerobacter subterraneus subsp. tengcongensis (strain DSM 15242 / JCM 11007 / NBRC 100824 / MB4) (Thermoanaerobacter tengcongensis).